Reading from the N-terminus, the 140-residue chain is Small ribosomal subunit protein uS12 (140 aa).

Residues 1–44 (MPTFNQLVRKGRKTMEKNSQAPALQKGFNSLRKKTTDASAPQKR) form a disordered region. At Asp-102 the chain carries 3-methylthioaspartic acid. Residues 120-140 (VAKRRQARSKYGAKRPKEAKK) form a disordered region. Residues 121–140 (AKRRQARSKYGAKRPKEAKK) show a composition bias toward basic residues.

The protein belongs to the universal ribosomal protein uS12 family. In terms of assembly, part of the 30S ribosomal subunit. Contacts proteins S8 and S17. May interact with IF1 in the 30S initiation complex.

Its function is as follows. With S4 and S5 plays an important role in translational accuracy. Interacts with and stabilizes bases of the 16S rRNA that are involved in tRNA selection in the A site and with the mRNA backbone. Located at the interface of the 30S and 50S subunits, it traverses the body of the 30S subunit contacting proteins on the other side and probably holding the rRNA structure together. The combined cluster of proteins S8, S12 and S17 appears to hold together the shoulder and platform of the 30S subunit. In Lachnoclostridium phytofermentans (strain ATCC 700394 / DSM 18823 / ISDg) (Clostridium phytofermentans), this protein is Small ribosomal subunit protein uS12.